We begin with the raw amino-acid sequence, 1256 residues long: GPI inositol-deacylase (1256 aa).

The span at 37–48 (DVYANSTTNATA) shows a compositional bias: polar residues. The disordered stretch occupies residues 37–203 (DVYANSTTNA…MEKEEEQKFV (167 aa)). 2 N-linked (GlcNAc...) asparagine glycosylation sites follow: Asn-41 and Asn-45. The span at 59-68 (PRPSRPSQSS) shows a compositional bias: low complexity. Residues 69–83 (AAERTSPESPSVRQS) are compositionally biased toward polar residues. Over residues 107–135 (QSPSQQSQNQQQQQQQQQQQQQQQQQQQS) the composition is skewed to low complexity. Residues 143–156 (SGNFNWKLSHSRNG) are compositionally biased toward polar residues. Residue Asn-155 is glycosylated (N-linked (GlcNAc...) asparagine). The segment covering 165–180 (FFSSSFSHSPSTPPLS) has biased composition (low complexity). Positions 190 to 202 (HSKEMEKEEEQKF) are enriched in basic and acidic residues. A helical membrane pass occupies residues 214-234 (AITFVTLLISILGIGFLALVL). An N-linked (GlcNAc...) asparagine glycan is attached at Asn-235. Ser-397 is a catalytic residue. N-linked (GlcNAc...) asparagine glycosylation is present at Asn-582. A run of 2 helical transmembrane segments spans residues 882-902 (LYMRYRTVFAAFPLLVVTLVL) and 929-949 (SIPLVLAFLTFLSLFIWNSSS). N-linked (GlcNAc...) asparagine glycosylation occurs at Asn-960. Transmembrane regions (helical) follow at residues 980–1000 (PFFWFLVPVIGLICVGICTVF), 1005–1025 (LTLVHILSTAVSLLSFRPGWI), 1053–1073 (ILLVLVSTLIPYQFAYLVCCL), 1103–1123 (SILLLMLWILPINLPILVVWI), 1130–1150 (WLTPFSSHHNVLSIMPFIILV), and 1172–1192 (VLLFGIALYAAIYGVSYAYML). N-linked (GlcNAc...) asparagine glycans are attached at residues Asn-1212, Asn-1239, and Asn-1242.

Belongs to the GPI inositol-deacylase family.

The protein localises to the endoplasmic reticulum membrane. Its function is as follows. Involved in inositol deacylation of GPI-anchored proteins which plays important roles in the quality control and ER-associated degradation of GPI-anchored proteins. The chain is GPI inositol-deacylase (bst-1) from Neurospora crassa (strain ATCC 24698 / 74-OR23-1A / CBS 708.71 / DSM 1257 / FGSC 987).